We begin with the raw amino-acid sequence, 346 residues long: UDP-3-O-acylglucosamine N-acyltransferase (346 aa).

Residue His-253 is the Proton acceptor of the active site.

This sequence belongs to the transferase hexapeptide repeat family. LpxD subfamily. As to quaternary structure, homotrimer.

The enzyme catalyses a UDP-3-O-[(3R)-3-hydroxyacyl]-alpha-D-glucosamine + a (3R)-hydroxyacyl-[ACP] = a UDP-2-N,3-O-bis[(3R)-3-hydroxyacyl]-alpha-D-glucosamine + holo-[ACP] + H(+). The protein operates within bacterial outer membrane biogenesis; LPS lipid A biosynthesis. Catalyzes the N-acylation of UDP-3-O-acylglucosamine using 3-hydroxyacyl-ACP as the acyl donor. Is involved in the biosynthesis of lipid A, a phosphorylated glycolipid that anchors the lipopolysaccharide to the outer membrane of the cell. The chain is UDP-3-O-acylglucosamine N-acyltransferase from Rickettsia conorii (strain ATCC VR-613 / Malish 7).